Reading from the N-terminus, the 294-residue chain is uncharacterized protein (294 aa).

The interval 259–294 (LNAPTPIPPPITSHAGQEEALKPQRASKGKKAKARK) is disordered. Residues 283-294 (RASKGKKAKARK) show a composition bias toward basic residues.

This is an uncharacterized protein from Homo sapiens (Human).